A 99-amino-acid polypeptide reads, in one-letter code: Protein dpy-30 homolog (99 aa).

An N-acetylmethionine modification is found at M1. The interval 1 to 26 (MEPEQMLEGQTQVAENPHSEYGLTDN) is disordered. Residue S19 is modified to Phosphoserine. K35 is subject to N6-acetyllysine; alternate. K35 is covalently cross-linked (Glycyl lysine isopeptide (Lys-Gly) (interchain with G-Cter in SUMO2); alternate).

It belongs to the dpy-30 family. Homodimer. Core component of several methyltransferase-containing complexes including MLL1/MLL, MLL2/3 (also named ASCOM complex) and MLL4/WBP7. Each complex is at least composed of ASH2L, RBBP5, WDR5, DPY30, one or more specific histone methyltransferases (KMT2A/MLL1, KMT2D/MLL2, KMT2C/MLL3 and KMT2B/MLL4), and the facultative components MEN1, HCFC1, HCFC2, NCOA6, KDM6A, PAXIP1/PTIP, PAGR1 and alpha- and beta-tubulin. Interacts with ASH2L; the interaction is direct. Interacts with ARFGEF1. Component of the SET1 complex, at least composed of the catalytic subunit (SETD1A or SETD1B), WDR5, WDR82, RBBP5, ASH2L/ASH2, CXXC1/CFP1, HCFC1 and DPY30.

The protein resides in the nucleus. The protein localises to the golgi apparatus. Its subcellular location is the trans-Golgi network. Functionally, as part of the MLL1/MLL complex, involved in the methylation of histone H3 at 'Lys-4', particularly trimethylation. Histone H3 'Lys-4' methylation represents a specific tag for epigenetic transcriptional activation. May play some role in histone H3 acetylation. In embryonic stem cells, may play a crucial role in retinoic acid-induced differentiation along the neural lineage, regulating gene induction and H3 'Lys-4' methylation at key developmental loci. May also play an indirect or direct role in endosomal transport. The chain is Protein dpy-30 homolog (DPY30) from Bos taurus (Bovine).